A 478-amino-acid chain; its full sequence is Serine/threonine-protein phosphatase T (478 aa).

TPR repeat units follow at residues 9–42 (ATALKVQGNKAFGQHEWPTAVDFYTQAIAKYDRE), 43–76 (PSFFSNRAQAHIKLEAYGFAIADATKALELDPAY), and 78–110 (KAYWRRALANTAILNYKDALRDFKVVAKREPNN). Residues 151–463 (AVDDSYDGVR…QVFEAVPHPD (313 aa)) are catalytic. Residues D221, H223, D250, and N282 each contribute to the Mn(2+) site. H283 acts as the Proton donor/acceptor in catalysis. The Mn(2+) site is built by H331 and H408.

Belongs to the PPP phosphatase family. PP-5 (PP-T) subfamily. Mg(2+) is required as a cofactor. The cofactor is Mn(2+).

The protein localises to the nucleus. The catalysed reaction is O-phospho-L-seryl-[protein] + H2O = L-seryl-[protein] + phosphate. It carries out the reaction O-phospho-L-threonyl-[protein] + H2O = L-threonyl-[protein] + phosphate. Functionally, protein phosphatase that specifically binds to and dephosphorylates the molecular chaperone Hsp90. Dephosphorylation positively regulates the Hsp90 chaperone machinery. The protein is Serine/threonine-protein phosphatase T of Aspergillus oryzae (strain ATCC 42149 / RIB 40) (Yellow koji mold).